The sequence spans 261 residues: Pyridoxine-5'-phosphate oxidase (261 aa).

42–45 (RGDR) contacts pyridoxal 5'-phosphate. Residue 95–98 (RMLL) participates in FMN binding. Residue lysine 100 coordinates pyridoxal 5'-phosphate. Residues 110–111 (FT), 116–117 (RK), and glutamine 139 each bind FMN. Residues tyrosine 157, arginine 161, and serine 165 each contribute to the pyridoxal 5'-phosphate site. FMN contacts are provided by residues 174-175 (QS) and tryptophan 219. 225-227 (RLH) contacts pyridoxal 5'-phosphate. Arginine 229 is a binding site for FMN. Threonine 238 is subject to Phosphothreonine. Serine 241 carries the post-translational modification Phosphoserine.

It belongs to the pyridoxamine 5'-phosphate oxidase family. As to quaternary structure, homodimer. FMN serves as cofactor. As to expression, ubiquitous. Expressed in liver, brain, lung, prostate and stomach (at protein level).

The enzyme catalyses pyridoxine 5'-phosphate + O2 = pyridoxal 5'-phosphate + H2O2. The catalysed reaction is pyridoxamine 5'-phosphate + O2 + H2O = pyridoxal 5'-phosphate + H2O2 + NH4(+). Its pathway is cofactor metabolism; pyridoxal 5'-phosphate salvage; pyridoxal 5'-phosphate from pyridoxamine 5'-phosphate: step 1/1. It functions in the pathway cofactor metabolism; pyridoxal 5'-phosphate salvage; pyridoxal 5'-phosphate from pyridoxine 5'-phosphate: step 1/1. In terms of biological role, catalyzes the oxidation of either pyridoxine 5'-phosphate (PNP) or pyridoxamine 5'-phosphate (PMP) into pyridoxal 5'-phosphate (PLP). This chain is Pyridoxine-5'-phosphate oxidase (PNPO), found in Homo sapiens (Human).